Here is a 562-residue protein sequence, read N- to C-terminus: Transcriptional adapter 2A (562 aa).

A ZZ-type zinc finger spans residues 91–146 (KDANRCATCRCSLTEPYIKCSECLDTLLCLQCFSRGKEAFSHRNNHAYIIVRDNIQ). Residues Cys-96, Cys-99, Cys-110, Cys-113, Cys-119, Cys-122, His-132, and His-136 each contribute to the Zn(2+) site. The region spanning 154-198 (WTARDERILLKTLRTHGYGNWEAVSQALDQRHEPAEVRRHYHDCY) is the SANT domain. The region spanning 471-562 (CLTPTEYNFS…GHISRPPSYG (92 aa)) is the SWIRM domain.

Component of the Ada2a-containing (ATAC) complex composed of at least Ada2a, Atac1, Hcf, Ada3, Gcn5, Mocs2B, Charac-14, Atac3, Atac2, NC2beta and wds. Component of a complex that does not include Gcn5 or Ada3.

The protein localises to the nucleus. It localises to the chromosome. In terms of biological role, component of the histone acetyltransferase (HAT) complex ATAC; predominantly involved in acetylation of histone H4, including at Lys-6 (H4K5ac) and Lys-13 (H4K12ac). May be part of several different complexes, including Gcn5-independent complexes involved in RNA polymerase II-dependent transcription. This is Transcriptional adapter 2A from Drosophila melanogaster (Fruit fly).